The primary structure comprises 654 residues: Glycogen debranching enzyme (654 aa).

The Nucleophile role is filled by Asp336. Residue Glu371 is the Proton donor of the active site. A disordered region spans residues 459-484 (EANGEENRDGTNSNYSDNHGKEGLGG).

The protein belongs to the glycosyl hydrolase 13 family.

It carries out the reaction Hydrolysis of (1-&gt;6)-alpha-D-glucosidic linkages to branches with degrees of polymerization of three or four glucose residues in limit dextrin.. The protein operates within glycan degradation; glycogen degradation. Functionally, removes maltotriose and maltotetraose chains that are attached by 1,6-alpha-linkage to the limit dextrin main chain, generating a debranched limit dextrin. In Salmonella typhi, this protein is Glycogen debranching enzyme.